A 293-amino-acid chain; its full sequence is Undecaprenyl-diphosphatase (293 aa).

7 helical membrane-spanning segments follow: residues 3 to 23 (IALAIKALILGIVEGLTEFLP), 43 to 63 (KGKIFEIVIQFGAILAVCWEF), 85 to 105 (LNVIVATIPAITLALIFGKAI), 109 to 129 (LFNPIVVASAFIIGGLVILWA), 203 to 223 (VATEFSFFLAIPVIFGATVYE), 238 to 258 (IFGIGFVAAFISAFFCVRWLL), and 269 to 289 (FAWYRIVFGVIVLVTAYTHLI).

Belongs to the UppP family.

Its subcellular location is the cell inner membrane. It catalyses the reaction di-trans,octa-cis-undecaprenyl diphosphate + H2O = di-trans,octa-cis-undecaprenyl phosphate + phosphate + H(+). In terms of biological role, catalyzes the dephosphorylation of undecaprenyl diphosphate (UPP). Confers resistance to bacitracin. In Ralstonia nicotianae (strain ATCC BAA-1114 / GMI1000) (Ralstonia solanacearum), this protein is Undecaprenyl-diphosphatase.